The primary structure comprises 156 residues: Small ribosomal subunit protein uS7 (156 aa).

It belongs to the universal ribosomal protein uS7 family. In terms of assembly, part of the 30S ribosomal subunit. Contacts proteins S9 and S11.

Functionally, one of the primary rRNA binding proteins, it binds directly to 16S rRNA where it nucleates assembly of the head domain of the 30S subunit. Is located at the subunit interface close to the decoding center, probably blocks exit of the E-site tRNA. The protein is Small ribosomal subunit protein uS7 of Neisseria gonorrhoeae (strain ATCC 700825 / FA 1090).